The primary structure comprises 305 residues: tRNA pseudouridine synthase B (305 aa).

The active-site Nucleophile is D48.

Belongs to the pseudouridine synthase TruB family. Type 1 subfamily.

It carries out the reaction uridine(55) in tRNA = pseudouridine(55) in tRNA. Its function is as follows. Responsible for synthesis of pseudouridine from uracil-55 in the psi GC loop of transfer RNAs. The protein is tRNA pseudouridine synthase B of Actinobacillus pleuropneumoniae serotype 5b (strain L20).